The chain runs to 288 residues: Intermediate transcription factor 3 small subunit (288 aa).

Belongs to the orthopoxvirus OPG134 family. In terms of assembly, heterodimer of a 45 kDa (A23R) and a 32 kDa (A8R) subunit to form the virus intermediate transcription factor (VITF)-3.

Its function is as follows. Acts with RNA polymerase to initiate transcription from intermediate gene promoters. The protein is Intermediate transcription factor 3 small subunit (OPG134) of Homo sapiens (Human).